Reading from the N-terminus, the 603-residue chain is UvrABC system protein C (603 aa).

Positions 15–92 (DQPGCYLMKD…IKKHDPRFNI (78 aa)) constitute a GIY-YIG domain. A UVR domain is found at 197–232 (KTVKNDLMKKMQEAAENMEFEKAGEFRDQINAIETT).

Belongs to the UvrC family. In terms of assembly, interacts with UvrB in an incision complex.

The protein localises to the cytoplasm. The UvrABC repair system catalyzes the recognition and processing of DNA lesions. UvrC both incises the 5' and 3' sides of the lesion. The N-terminal half is responsible for the 3' incision and the C-terminal half is responsible for the 5' incision. The sequence is that of UvrABC system protein C from Listeria monocytogenes serovar 1/2a (strain ATCC BAA-679 / EGD-e).